The chain runs to 280 residues: 4-diphosphocytidyl-2-C-methyl-D-erythritol kinase (280 aa).

Residue Lys8 is part of the active site. 91 to 101 is an ATP binding site; it reads PVAAGLAGGST. Asp133 is a catalytic residue.

Belongs to the GHMP kinase family. IspE subfamily.

It carries out the reaction 4-CDP-2-C-methyl-D-erythritol + ATP = 4-CDP-2-C-methyl-D-erythritol 2-phosphate + ADP + H(+). Its pathway is isoprenoid biosynthesis; isopentenyl diphosphate biosynthesis via DXP pathway; isopentenyl diphosphate from 1-deoxy-D-xylulose 5-phosphate: step 3/6. Catalyzes the phosphorylation of the position 2 hydroxy group of 4-diphosphocytidyl-2C-methyl-D-erythritol. In Clostridium botulinum (strain Okra / Type B1), this protein is 4-diphosphocytidyl-2-C-methyl-D-erythritol kinase.